Consider the following 332-residue polypeptide: 4-hydroxyproline 2-epimerase 2 (332 aa).

Cys89 serves as the catalytic Proton acceptor. Substrate is bound by residues His222, Asp248, and 253–254 (GT).

It belongs to the proline racemase family.

The enzyme catalyses trans-4-hydroxy-L-proline = cis-4-hydroxy-D-proline. In terms of biological role, catalyzes the epimerization of trans-4-hydroxy-L-proline (t4LHyp) to cis-4-hydroxy-D-proline (c4DHyp). Is likely involved in a degradation pathway that converts t4LHyp to alpha-ketoglutarate. Displays no proline racemase activity. This is 4-hydroxyproline 2-epimerase 2 from Rhizobium rhizogenes (strain K84 / ATCC BAA-868) (Agrobacterium radiobacter).